A 1219-amino-acid polypeptide reads, in one-letter code: MPVSTSLHQDGSQERPVSLTSTTSSSGSSCDSRSAMEEPSSSEAPAKNGAGSLRSRHLPNSNNNSSSWLNVKGPLSPFNSRAAAGPAHHKLSYLGRVVREIVETERMYVQDLRSIVEDYLLKIIDTPGLLKPEQVSALFGNIENIYALNSQLLRDLDSCNSDPVAVASCFVERSQEFDIYTQYCNNYPNSVAALTECMRDKQQAKFFRDRQELLQHSLPLGSYLLKPVQRILKYHLLLQEIAKHFDEEEDGFEVVEDAIDTMTCVAWYINDMKRRHEHAVRLQEIQSLLINWKGPDLTTYGELVLEGTFRVHRVRNERTFFLFDKTLLITKKRGDHFVYKGNIPCSSLMLIESTRDSLCFTVTHYKHSKQQYSIQAKTVEEKRNWTHHIKRLILENHHATIPQKAKEAILEMDSYYPNRYRCSPERLKKAWSSQDEVSTNVRQGRRQSEPTKHLLRQLNEKARAAGMKGKGRRESESSRSSRRPSGRSPTSTEKRMSFESISSLPEVEPDPEAGSEQEVFSAVEGPSAEETPSDTESPEVLETQLDAHQGLLGMDPPGDMVDFVAAESTEDLKALSSEEEEEMGGAAQEPESLLPPSVLDQASVIAERFVSSFSRRSSVAQEDSKSSGFGSPRLVSRSSSVLSLEGSEKGLARHGSATDSLSCQLSPEVDISVGVATEDSPSVNGMEPPSPGCPVEPDRSSCKKKESALSTRDRLLLDKIKSYYENAEHHDAGFSVRRRESLSYIPKGLVRNSISRFNSLPRPDPEPVPPVGSKRQVGSRPTSWALFELPGPSQAVKGDPPPISDAEFRPSSEIVKIWEGMESSGGSPGKGPGQGQANGFDLHEPLFILEEHELGAITEESATASPESSSPTEGRSPAHLARELKELVKELSSSTQGELVAPLHPRIVQLSHVMDSHVSERVKNKVYQLARQYSLRIKSNKPVMARPPLQWEKVAPERDGKSPTVPCLQEEAGEPLGGKGKRKPVLSLFDYEQLMAQEHSPPKPSSAGEMSPQRFFFNPSAVSQRTTSPGGRPSARSPLSPTETFSWPDVRELCSKYASRDEARRAGGGRPRGPPVNRSHSVPENMVEPPLSGRVGRCRSLSTKRGRGGGEAAQSPGPLPQSKPDGGETLYVTADLTLEDNRRVIVMEKGPLPSPTAGLEESSGQGPSSPVALLGQVQDFQQSAECQPKEEGSRDPADPSQQGRVRNLREKFQALNSVG.

Over residues 1–10 the composition is skewed to polar residues; that stretch reads MPVSTSLHQD. Positions 1 to 66 are disordered; sequence MPVSTSLHQD…HLPNSNNNSS (66 aa). Low complexity predominate over residues 18 to 46; the sequence is SLTSTTSSSGSSCDSRSAMEEPSSSEAPA. Serine 76 is subject to Phosphoserine. The DH domain maps to 93-272; the sequence is YLGRVVREIV…TCVAWYINDM (180 aa). The PH domain occupies 296–394; the sequence is DLTTYGELVL…WTHHIKRLIL (99 aa). The span at 431 to 442 shows a compositional bias: polar residues; sequence WSSQDEVSTNVR. Disordered stretches follow at residues 431–599 and 613–708; these read WSSQ…PSVL and FSRR…KESA. Serine 433 is subject to Phosphoserine. The segment covering 446 to 463 has biased composition (basic and acidic residues); the sequence is RQSEPTKHLLRQLNEKAR. 7 positions are modified to phosphoserine: serine 576, serine 577, serine 618, serine 631, serine 640, serine 643, and serine 647. Over residues 630-645 the composition is skewed to low complexity; it reads GSPRLVSRSSSVLSLE. The segment covering 696-708 has biased composition (basic and acidic residues); sequence EPDRSSCKKKESA. Residues serine 741, serine 779, and serine 827 each carry the phosphoserine modification. Disordered stretches follow at residues 756–780, 821–840, 859–878, 955–1133, and 1146–1207; these read RFNSLPRPDPEPVPPVGSKRQVGSR, MESSGGSPGKGPGQGQANGF, EESATASPESSSPTEGRSPA, APER…LYVT, and VMEK…RVRN. A compositionally biased stretch (gly residues) spans 826–836; it reads GSPGKGPGQGQ. Positions 859-873 are enriched in low complexity; the sequence is EESATASPESSSPTE. A phosphoserine mark is found at serine 962, serine 1011, serine 1023, serine 1037, and serine 1040. Residues 1020–1029 show a composition bias toward polar residues; the sequence is SAVSQRTTSP. The segment covering 1049 to 1065 has biased composition (basic and acidic residues); sequence DVRELCSKYASRDEARR. The residue at position 1081 (serine 1081) is a Phosphoserine. Arginine 1107 is modified (omega-N-methylarginine). The span at 1187–1197 shows a compositional bias: basic and acidic residues; the sequence is QPKEEGSRDPA.

The protein localises to the cytoplasm. The protein resides in the cytoskeleton. Its function is as follows. Plays a role in controlling cell polarity and cell motility by selectively binding newly polymerized actin and activating RAC1 and CDC42 to enhance local actin polymerization. This is Pleckstrin homology domain-containing family G member 3 from Homo sapiens (Human).